The chain runs to 278 residues: 2,5-diketo-D-gluconic acid reductase A (278 aa).

Tyr-50 serves as the catalytic Proton donor. Residue His-108 participates in substrate binding. NADP(+) is bound at residue 188-242 (GPLGQGKYDLFGAEPVTAAAAAHGKTPAQAVLRWHLQKGFVVFPKSVRRERLEEN). The segment at 259–278 (DAMDPGDGSGRVSAHPDEVD) is disordered.

This sequence belongs to the aldo/keto reductase family. In terms of assembly, monomer.

The protein resides in the cytoplasm. The catalysed reaction is 2-dehydro-L-idonate + NADP(+) = 2,5-didehydro-D-gluconate + NADPH + H(+). Its activity is regulated as follows. Inhibited by Zn(2+), Fe(3+), Cu(2+) and Ni(2+). Its function is as follows. Catalyzes the reduction of 2,5-diketo-D-gluconic acid (25DKG) to 2-keto-L-gulonic acid (2KLG). 5-keto-D-fructose and dihydroxyacetone can also serve as substrates. 25DKGR-A exhibits a greater selectivity for the substrate and higher thermal stability than 25DKGR-B. The chain is 2,5-diketo-D-gluconic acid reductase A (dkgA) from Corynebacterium sp. (strain ATCC 31090).